We begin with the raw amino-acid sequence, 476 residues long: MHDNTYLPDHFLHHIAAIMPAHLSMDEFVASCRRPLRRSIRVNTLKISVSDFVMQMQPLGWQFDAVPWCETGFWLTRADESVPLGNTAEHLSGLFYIQEASSMLPVTALFASDQVKRDGMLLDAAAAPGSKTTQIAALMNNQGMLVANEYSSSRLKVLSANIQRCGVTNVGMTHFDAKVFGQWLPETFDAILLDAPCSGEGTVRKDEDALRNWSIESIDEIAAVQQGLLESAFHALKPGGVLVYSTCTLSQQENQAVCQSLLEKFGDALTLDSLADLFPNAEQACTPEGYLHVWPQIFDSEGFFVARLRKHHSVPNTMFKPGKLGKFPFSPLPAKEAEPMLREIEANFGVVPPGQLFGRNDEIWLFPHLFGQVQGKLRFDRIGIKLAETFKKGYRLTHEWALAYGDKATQGVVELDSANAREFMMGRDVWPEQEAGTGEMIVRYQGHTLGMGKWVGSRVKNALPRELVRDNNLFGA.

S-adenosyl-L-methionine is bound by residues 125 to 131, Glu149, Asp176, and Asp194; that span reads AAAPGSK. Residue Cys247 is the Nucleophile of the active site.

It belongs to the class I-like SAM-binding methyltransferase superfamily. RsmB/NOP family.

The protein localises to the cytoplasm. It catalyses the reaction cytidine(1407) in 16S rRNA + S-adenosyl-L-methionine = 5-methylcytidine(1407) in 16S rRNA + S-adenosyl-L-homocysteine + H(+). Specifically methylates the cytosine at position 1407 (m5C1407) of 16S rRNA. In Aeromonas salmonicida (strain A449), this protein is Ribosomal RNA small subunit methyltransferase F.